The sequence spans 492 residues: 2-succinylbenzoate--CoA ligase (492 aa).

The protein belongs to the ATP-dependent AMP-binding enzyme family. MenE subfamily.

The catalysed reaction is 2-succinylbenzoate + ATP + CoA = 2-succinylbenzoyl-CoA + AMP + diphosphate. Its pathway is quinol/quinone metabolism; 1,4-dihydroxy-2-naphthoate biosynthesis; 1,4-dihydroxy-2-naphthoate from chorismate: step 5/7. The protein operates within quinol/quinone metabolism; menaquinone biosynthesis. Its function is as follows. Converts 2-succinylbenzoate (OSB) to 2-succinylbenzoyl-CoA (OSB-CoA). This is 2-succinylbenzoate--CoA ligase from Staphylococcus aureus (strain USA300 / TCH1516).